The following is a 579-amino-acid chain: Glutamine--tRNA ligase (579 aa).

Residues 41-51 (PEPNGYLHIGH) carry the 'HIGH' region motif. ATP-binding positions include 42–44 (EPN) and 48–54 (HIGHAKA). Residues D74 and Y218 each coordinate L-glutamine. Residues T237, 285-286 (RL), and 293-295 (MSK) each bind ATP. The 'KMSKS' region signature appears at 292–296 (VMSKR).

This sequence belongs to the class-I aminoacyl-tRNA synthetase family. In terms of assembly, monomer.

It is found in the cytoplasm. The catalysed reaction is tRNA(Gln) + L-glutamine + ATP = L-glutaminyl-tRNA(Gln) + AMP + diphosphate. This is Glutamine--tRNA ligase from Xanthomonas campestris pv. campestris (strain 8004).